A 185-amino-acid chain; its full sequence is HTH-type transcriptional regulator Hpr (185 aa).

In terms of domain architecture, HTH marR-type spans 13–157 (AMIFSQRIAQ…LIAILRNIYG (145 aa)). The segment at residues 63–86 (ISEIAKFGVMHVSTAFNFSKKLEE) is a DNA-binding region (H-T-H motif).

As to quaternary structure, homodimer.

Functionally, negative regulator of protease production and sporulation. The chain is HTH-type transcriptional regulator Hpr from Bacillus mycoides (strain KBAB4) (Bacillus weihenstephanensis).